Consider the following 350-residue polypeptide: MLKKINKIKDQFISDLNKVKTIEEAEKLKKSLLGKESELSEILKSLKDSDTNDKQAIGIASHELRTFIASTIDEFVARIKKEALDAKLASEKIDVSLTGTLARFGTKHPLNIVVEEITQIFTEIGFDVLNGNDVESDEYCFQKLNLPVGHPARDMQDTFYIDEETVLSTHCTHMTARVLTQMAKDENFEGNYACVAIGNVYRRDDDDATHSHQFMQLDLLCIGKKITFANLKWVLKYMCKRLFGEEVNIRLRPSLFPFTEPSVEVDVSCFKCSGKGCSICKYSGWIEILGSGIINEQVMLLNGMDPEKNTALAFGAGIERIAMLKFGISNIRNLYENNVQFLEQFKFYGE.

Residue Glu260 participates in Mg(2+) binding.

It belongs to the class-II aminoacyl-tRNA synthetase family. Phe-tRNA synthetase alpha subunit type 1 subfamily. Tetramer of two alpha and two beta subunits. Requires Mg(2+) as cofactor.

It is found in the cytoplasm. The enzyme catalyses tRNA(Phe) + L-phenylalanine + ATP = L-phenylalanyl-tRNA(Phe) + AMP + diphosphate + H(+). This Mesoplasma florum (strain ATCC 33453 / NBRC 100688 / NCTC 11704 / L1) (Acholeplasma florum) protein is Phenylalanine--tRNA ligase alpha subunit.